We begin with the raw amino-acid sequence, 164 residues long: Inner membrane assembly complex subunit 17 (164 aa).

A mitochondrion-targeting transit peptide spans M1–R28. The Mitochondrial matrix segment spans residues S29 to R97. The helical transmembrane segment at P98 to W118 threads the bilayer. Residues K119–W164 lie on the Mitochondrial intermembrane side of the membrane. The stretch at A121–T149 forms a coiled coil.

Belongs to the INA17 family. As to quaternary structure, component of the inner membrane assembly (INA) complex, composed of INA17 and INA22. Interacts with a subset of F(1)F(0)-ATP synthase subunits of the F(1)-domain and the peripheral stalk.

It is found in the mitochondrion inner membrane. In terms of biological role, component of the INA complex (INAC) that promotes the biogenesis of mitochondrial F(1)F(0)-ATP synthase. INAC facilitates the assembly of the peripheral stalk and promotes the assembly of the catalytic F(1)-domain with the membrane-embedded F(0)-domain. The polypeptide is Inner membrane assembly complex subunit 17 (Candida glabrata (strain ATCC 2001 / BCRC 20586 / JCM 3761 / NBRC 0622 / NRRL Y-65 / CBS 138) (Yeast)).